Consider the following 750-residue polypeptide: Putative tyrosine-protein kinase EpsB (750 aa).

Topologically, residues M1–R31 are cytoplasmic. The helical transmembrane segment at W32–A52 threads the bilayer. Residues R53–K444 are Periplasmic-facing. A helical membrane pass occupies residues L445–V465. Residues R466 to A750 lie on the Cytoplasmic side of the membrane.

Belongs to the etk/wzc family.

The protein localises to the cell inner membrane. The catalysed reaction is L-tyrosyl-[protein] + ATP = O-phospho-L-tyrosyl-[protein] + ADP + H(+). In terms of biological role, probably involved in polymerization and/or export of exopolysaccharide EPS I which functions as a virulence factor. May be involved in an ATP-dependent process in the pathway for EPS I production, possibly export of the trimeric repeat units across the inner membrane or their polymerization. The sequence is that of Putative tyrosine-protein kinase EpsB (epsB) from Ralstonia solanacearum (Pseudomonas solanacearum).